The chain runs to 368 residues: Agmatine deiminase (368 aa).

The active-site Amidino-cysteine intermediate is the Cys357.

This sequence belongs to the agmatine deiminase family. Homodimer.

It catalyses the reaction agmatine + H2O = N-carbamoylputrescine + NH4(+). It participates in amine and polyamine biosynthesis; putrescine biosynthesis via agmatine pathway; N-carbamoylputrescine from agmatine: step 1/1. Mediates the hydrolysis of agmatine into N-carbamoylputrescine in the arginine decarboxylase (ADC) pathway of putrescine biosynthesis, a basic polyamine. This Pseudomonas syringae pv. tomato (strain ATCC BAA-871 / DC3000) protein is Agmatine deiminase.